Reading from the N-terminus, the 426-residue chain is 3-phosphoshikimate 1-carboxyvinyltransferase (426 aa).

3 residues coordinate 3-phosphoshikimate: Lys-22, Ser-23, and Arg-27. Lys-22 is a binding site for phosphoenolpyruvate. Phosphoenolpyruvate-binding residues include Gly-96 and Arg-124. 3-phosphoshikimate is bound by residues Ser-170, Ser-171, Gln-172, Ser-198, Asp-314, Asn-337, and Lys-341. Phosphoenolpyruvate is bound at residue Gln-172. Catalysis depends on Asp-314, which acts as the Proton acceptor. Arg-345, Arg-387, and Lys-412 together coordinate phosphoenolpyruvate.

This sequence belongs to the EPSP synthase family. Monomer.

Its subcellular location is the cytoplasm. It catalyses the reaction 3-phosphoshikimate + phosphoenolpyruvate = 5-O-(1-carboxyvinyl)-3-phosphoshikimate + phosphate. It functions in the pathway metabolic intermediate biosynthesis; chorismate biosynthesis; chorismate from D-erythrose 4-phosphate and phosphoenolpyruvate: step 6/7. Functionally, catalyzes the transfer of the enolpyruvyl moiety of phosphoenolpyruvate (PEP) to the 5-hydroxyl of shikimate-3-phosphate (S3P) to produce enolpyruvyl shikimate-3-phosphate and inorganic phosphate. The polypeptide is 3-phosphoshikimate 1-carboxyvinyltransferase (Shewanella loihica (strain ATCC BAA-1088 / PV-4)).